Consider the following 267-residue polypeptide: RWD domain-containing protein 3 (267 aa).

The 108-residue stretch at 7–114 (EELSVLAAIF…LWIQQNLRHI (108 aa)) folds into the RWD domain. Interaction with UBE2I/UBC9 stretches follow at residues 13 to 15 (AAI) and 100 to 102 (VHE).

In terms of assembly, isoform 1 and isoform 2 interact with UBE2I/UBC9. Isoform 1 shows a greater interaction with NFKBIA and HIF1A as compared to isoform 2. Isoform 2 interacts with NCOA2 and NR3C1. In terms of tissue distribution, isoform 1 and isoform 2 are expressed in glioma tumors (at protein level). Expressed in a wide number of tissues with highest expression in cerebellum, pituitary, heart, kidney, liver, stomach, pancreas, prostate and spleen. Low levels in thalamus, spinal cord, esophagus, thymus, lung and peripheral blood leukocytes. A higher level expression seen in pituitary tumors as compared to the pituitary gland.

It is found in the nucleus. Its subcellular location is the cytoplasm. In terms of biological role, enhancer of SUMO conjugation. Via its interaction with UBE2I/UBC9, increases SUMO conjugation to proteins by promoting the binding of E1 and E2 enzymes, thioester linkage between SUMO and UBE2I/UBC9 and transfer of SUMO to specific target proteins which include HIF1A, PIAS, NFKBIA, NR3C1 and TOP1. Isoform 1 and isoform 2 positively regulate the NF-kappa-B signaling pathway by enhancing the sumoylation of NF-kappa-B inhibitor alpha (NFKBIA), promoting its stabilization which consequently leads to an increased inhibition of NF-kappa-B transcriptional activity. Isoform 1 and isoform 2 negatively regulate the hypoxia-inducible factor-1 alpha (HIF1A) signaling pathway by increasing the sumoylation of HIF1A, promoting its stabilization, transcriptional activity and the expression of its target gene VEGFA during hypoxia. Isoform 2 promotes the sumoylation and transcriptional activity of the glucocorticoid receptor NR3C1 and enhances the interaction of SUMO1 and NR3C1 with UBE2I/UBC9. Has no effect on ubiquitination. This chain is RWD domain-containing protein 3 (RWDD3), found in Homo sapiens (Human).